An 833-amino-acid chain; its full sequence is Ventricular zone-expressed PH domain-containing protein homolog 1 (833 aa).

Positions 201 to 319 (TELLALMSQL…TYLVSQLANM (119 aa)) are interaction with TGFBR1. The interval 458–505 (KGVGSDDGEDENRGDIPASISLSEIDPLGQGNDKLPFKTDTERSQLGE) is disordered. Basic and acidic residues predominate over residues 492-502 (LPFKTDTERSQ). The segment at 663–833 (ESTFPQQKDL…RESREVTTYL (171 aa)) is interaction with TGFBR1. Positions 716–819 (QPLIEGKLKE…WLQCINVAVA (104 aa)) constitute a PH domain.

The protein belongs to the MELT/VEPH family. As to quaternary structure, interacts with TGFBR1.

The protein localises to the cell membrane. Its function is as follows. Interacts with TGF-beta receptor type-1 (TGFBR1) and inhibits dissociation of activated SMAD2 from TGFBR1, impeding its nuclear accumulation and resulting in impaired TGF-beta signaling. May also affect FOXO, Hippo and Wnt signaling. In Homo sapiens (Human), this protein is Ventricular zone-expressed PH domain-containing protein homolog 1 (VEPH1).